A 291-amino-acid polypeptide reads, in one-letter code: Pirin (291 aa).

Fe cation-binding residues include histidine 56, histidine 58, histidine 101, and glutamate 103.

It belongs to the pirin family. As to quaternary structure, may interact with NF1/CTF1. Interacts with BCL3. Identified in a complex comprised of PIR, BLC3, NFKB1 and target DNA. It depends on Fe cation as a cofactor.

Its subcellular location is the nucleus. The protein localises to the cytoplasm. It carries out the reaction quercetin + O2 = 2-(3,4-dihydroxybenzoyloxy)-4,6-dihydroxybenzoate + CO. Its pathway is flavonoid metabolism; quercetin degradation. Its function is as follows. Transcriptional coregulator of NF-kappa-B which facilitates binding of NF-kappa-B proteins to target kappa-B genes in a redox-state-dependent manner. May be required for efficient terminal myeloid maturation of hematopoietic cells. Has quercetin 2,3-dioxygenase activity (in vitro). In Rattus norvegicus (Rat), this protein is Pirin (Pir).